Consider the following 228-residue polypeptide: Phosphoglycolate phosphatase (228 aa).

The Nucleophile role is filled by Asp9. The Mg(2+) site is built by Asp9 and Asp11. Position 151 (Lys151) interacts with substrate. Mg(2+)-binding residues include Asp174 and Asp178.

Belongs to the archaeal SPP-like hydrolase family. Requires Mg(2+) as cofactor.

The enzyme catalyses 2-phosphoglycolate + H2O = glycolate + phosphate. In terms of biological role, catalyzes the dephosphorylation of 2-phosphoglycolate. The polypeptide is Phosphoglycolate phosphatase (Pyrobaculum islandicum (strain DSM 4184 / JCM 9189 / GEO3)).